Consider the following 381-residue polypeptide: Homoserine O-succinyltransferase (381 aa).

Positions N45–D360 constitute an AB hydrolase-1 domain. S151 acts as the Nucleophile in catalysis. R221 is a substrate binding site. Active-site residues include D321 and H354. D355 contributes to the substrate binding site.

It belongs to the AB hydrolase superfamily. MetX family. As to quaternary structure, homodimer.

It is found in the cytoplasm. The catalysed reaction is L-homoserine + succinyl-CoA = O-succinyl-L-homoserine + CoA. It functions in the pathway amino-acid biosynthesis; L-methionine biosynthesis via de novo pathway; O-succinyl-L-homoserine from L-homoserine: step 1/1. Its function is as follows. Transfers a succinyl group from succinyl-CoA to L-homoserine, forming succinyl-L-homoserine. The protein is Homoserine O-succinyltransferase of Paraburkholderia xenovorans (strain LB400).